The primary structure comprises 253 residues: uncharacterized protein (253 aa).

Residues isoleucine 17, serine 36, aspartate 62, asparagine 89, lysine 123, tyrosine 158, lysine 162, valine 191, and threonine 193 each coordinate NADP(+). Catalysis depends on tyrosine 158, which acts as the Proton acceptor. The active-site Lowers pKa of active site Tyr is the lysine 162.

This sequence belongs to the short-chain dehydrogenases/reductases (SDR) family.

It localises to the cytoplasm. The protein localises to the nucleus. This is an uncharacterized protein from Schizosaccharomyces pombe (strain 972 / ATCC 24843) (Fission yeast).